A 275-amino-acid chain; its full sequence is NH(3)-dependent NAD(+) synthetase (275 aa).

Gly-46–Ser-53 lines the ATP pocket. A Mg(2+)-binding site is contributed by Asp-52. Arg-140 is a deamido-NAD(+) binding site. Residue Thr-160 coordinates ATP. Glu-165 lines the Mg(2+) pocket. The deamido-NAD(+) site is built by Lys-173 and Asp-180. Residues Lys-189 and Thr-211 each contribute to the ATP site. A deamido-NAD(+)-binding site is contributed by His-260–Lys-261.

The protein belongs to the NAD synthetase family. In terms of assembly, homodimer.

The enzyme catalyses deamido-NAD(+) + NH4(+) + ATP = AMP + diphosphate + NAD(+) + H(+). The protein operates within cofactor biosynthesis; NAD(+) biosynthesis; NAD(+) from deamido-NAD(+) (ammonia route): step 1/1. In terms of biological role, catalyzes the ATP-dependent amidation of deamido-NAD to form NAD. Uses ammonia as a nitrogen source. In Salmonella choleraesuis (strain SC-B67), this protein is NH(3)-dependent NAD(+) synthetase.